A 361-amino-acid polypeptide reads, in one-letter code: Probable cadicidin biosynthesis thioesterase (361 aa).

The 4Fe-4S ferredoxin-type domain maps to 2–29 (RVTVDSEQCVGAGQCVLNAPEVFDQDDD). A disordered region spans residues 36-110 (RADPTSGTTR…RRDSPVTTAD (75 aa)). Residues 46-61 (RSARRATCARRPRSSS) are compositionally biased toward basic residues. Composition is skewed to basic and acidic residues over residues 62 to 74 (RRTE…DRHR) and 94 to 104 (TDRRQNHRRDS). The active site involves S201.

It belongs to the thioesterase family.

Its pathway is antibiotic biosynthesis; candicidin biosynthesis. Probable thioesterase involved in the biosynthesis of candicidin. Could release the macrolide ring from the polyketide synthase. This chain is Probable cadicidin biosynthesis thioesterase, found in Streptomyces griseus.